Here is a 341-residue protein sequence, read N- to C-terminus: HTH-type transcriptional repressor PurR (341 aa).

Residues 2–56 enclose the HTH lacI-type domain; the sequence is ATIKDVAKRANVSTTTVSHVINKTRFVAEETRNAVWAAIKELHYSPSAVARSLKV. The segment at residues 4 to 23 is a DNA-binding region (H-T-H motif); the sequence is IKDVAKRANVSTTTVSHVIN. The DNA-binding element occupies 48 to 56; sequence SAVARSLKV. Hypoxanthine-binding residues include Tyr-73, Arg-190, Thr-192, Phe-221, and Asp-275.

Homodimer.

It participates in purine metabolism; purine nucleotide biosynthesis [regulation]. Is the main repressor of the genes involved in the de novo synthesis of purine nucleotides, regulating purB, purC, purEK, purF, purHD, purL, purMN and guaBA expression. PurR is allosterically activated to bind its cognate DNA by binding the purine corepressors, hypoxanthine or guanine, thereby effecting transcription repression. This chain is HTH-type transcriptional repressor PurR, found in Salmonella typhi.